The following is a 488-amino-acid chain: NADH-ubiquinone oxidoreductase chain 2 (488 aa).

The next 14 membrane-spanning stretches (helical) occupy residues 11–31, 38–58, 74–94, 106–126, 129–149, 162–182, 211–231, 239–259, 271–291, 299–319, 331–351, 376–396, 412–434, and 460–480; these read MIKY…SISI, MMLL…LLTI, ELIT…ISMF, ITEE…ISME, NLIT…ILAL, LKYY…IVSI, IALI…HGWL, GMLM…IVLI, IEVI…VGTV, VIRF…LFFV, IYYL…IIGV, IGIS…FTNF, IYIT…NVVK, and IVGG…IISI.

The protein belongs to the complex I subunit 2 family.

The protein resides in the mitochondrion inner membrane. The enzyme catalyses a ubiquinone + NADH + 5 H(+)(in) = a ubiquinol + NAD(+) + 4 H(+)(out). Functionally, core subunit of the mitochondrial membrane respiratory chain NADH dehydrogenase (Complex I) that is believed to belong to the minimal assembly required for catalysis. Complex I functions in the transfer of electrons from NADH to the respiratory chain. The immediate electron acceptor for the enzyme is believed to be ubiquinone. The chain is NADH-ubiquinone oxidoreductase chain 2 (nad2) from Dictyostelium discoideum (Social amoeba).